The sequence spans 1088 residues: Sterol regulatory element-binding protein 2 (1088 aa).

Residues 1–38 (METLTELGDELTLGDIDEMLQFVSNQVGEFPDLFEEQL) form a transcriptional activation (acidic) region. The Cytoplasmic portion of the chain corresponds to 1–440 (METLTELGDE…TGLGMMDRSR (440 aa)). Residues 59 to 70 (AAQQPYTTSAPQ) are compositionally biased toward polar residues. The tract at residues 59-87 (AAQQPYTTSAPQPQLLPVKAPPQATPQRT) is disordered. One can recognise a bHLH domain in the interval 290-340 (ERRTTHNIIEKRYRSSINDKIMELKDLVMGTDAKMHKSGVLKKAIDYIKYL). Residues 340 to 361 (LQQVNQKLRQENMALKLANQKN) form a leucine-zipper region. The interval 392–431 (SPPASDSGSPAVFSPYSVDSEPGSPLLDDEKVKDEPDSPT) is disordered. The chain crosses the membrane as a helical span at residues 441-461 (MLLCTMTFLCLSFNPLTSLLH). Residues 462–494 (PESGQYSERAVQHGTGRTMLGVEMSGFYGSWFD) lie on the Lumenal side of the membrane. Residues 495–515 (WLIPTIILWLVNGVIVLSVFM) traverse the membrane as a helical segment. Residues 516 to 1088 (KLLIHGEPVT…LSGGTAMAAS (573 aa)) lie on the Cytoplasmic side of the membrane.

The protein belongs to the SREBP family. As to quaternary structure, forms a tight complex with scap, the SCAP-SREBP complex, in the endoplasmic reticulum membrane. Homodimer; efficient DNA binding of the soluble transcription factor fragment requires dimerization with another bHLH protein. Post-translationally, processed in the Golgi apparatus, releasing the protein from the membrane. At low cholesterol the SCAP-SREBP complex is recruited into COPII vesicles for export from the endoplasmic reticulum. In the Golgi, complex SREBPs are cleaved sequentially by site-1 (MBTPS1, S1P) and site-2 (MBTPS2, S2P) proteases. The first cleavage by site-1 protease occurs within the luminal loop, the second cleavage by site-2 protease occurs within the first transmembrane domain, releasing the transcription factor from the Golgi membrane.

The protein localises to the endoplasmic reticulum membrane. It is found in the golgi apparatus membrane. The protein resides in the cytoplasmic vesicle. It localises to the COPII-coated vesicle membrane. Its subcellular location is the nucleus. Precursor of the transcription factor form (Processed sterol regulatory element-binding protein 2), which is embedded in the endoplasmic reticulum membrane. Low sterol concentrations promote processing of this form, releasing the transcription factor form that translocates into the nucleus and activates transcription of genes involved in cholesterol biosynthesis. Functionally, key transcription factor that regulates expression of genes involved in cholesterol biosynthesis. Binds to the sterol regulatory element 1 (SRE-1) (5'-ATCACCCCAC-3'). Has dual sequence specificity binding to both an E-box motif (5'-ATCACGTGA-3') and to SRE-1 (5'-ATCACCCCAC-3'). Regulates transcription of genes related to cholesterol synthesis pathway. The polypeptide is Sterol regulatory element-binding protein 2 (Xenopus laevis (African clawed frog)).